Consider the following 411-residue polypeptide: Probable protein S-acyltransferase 2 (411 aa).

A run of 2 helical transmembrane segments spans residues 56–76 (LTTA…VFLI) and 85–105 (SLIL…LFLT). The 51-residue stretch at 160 to 210 (KFCDTCLLYRPPRASHCSICNNCVQRFDHHCPWVGQCIALRNYPYFICFIS) folds into the DHHC domain. The active-site S-palmitoyl cysteine intermediate is the Cys190. 2 helical membrane passes run 205-225 (FICF…FSWV) and 245-265 (FVVL…LTVF). Position 405 is a phosphoserine (Ser405).

This sequence belongs to the DHHC palmitoyltransferase family. Expressed in flowers and pollen.

The protein localises to the cytoplasmic vesicle membrane. The enzyme catalyses L-cysteinyl-[protein] + hexadecanoyl-CoA = S-hexadecanoyl-L-cysteinyl-[protein] + CoA. Its function is as follows. Palmitoyl acyltransferase. The polypeptide is Probable protein S-acyltransferase 2 (PAT02) (Arabidopsis thaliana (Mouse-ear cress)).